Here is a 256-residue protein sequence, read N- to C-terminus: Pimeloyl-[acyl-carrier protein] methyl ester esterase (256 aa).

Residues 15-242 form the AB hydrolase-1 domain; it reads HLVLLHGWGL…AAHAPFISHP (228 aa). Substrate is bound by residues tryptophan 22, 82-83, and 143-147; these read SL and FLALQ. Serine 82 (nucleophile) is an active-site residue. Catalysis depends on residues aspartate 207 and histidine 235. Histidine 235 contacts substrate.

Belongs to the AB hydrolase superfamily. Carboxylesterase BioH family. In terms of assembly, monomer.

It is found in the cytoplasm. It catalyses the reaction 6-carboxyhexanoyl-[ACP] methyl ester + H2O = 6-carboxyhexanoyl-[ACP] + methanol + H(+). Its pathway is cofactor biosynthesis; biotin biosynthesis. Functionally, the physiological role of BioH is to remove the methyl group introduced by BioC when the pimeloyl moiety is complete. It allows to synthesize pimeloyl-ACP via the fatty acid synthetic pathway through the hydrolysis of the ester bonds of pimeloyl-ACP esters. In Escherichia coli O6:K15:H31 (strain 536 / UPEC), this protein is Pimeloyl-[acyl-carrier protein] methyl ester esterase.